We begin with the raw amino-acid sequence, 276 residues long: Tumor necrosis factor-inducible gene 6 protein (276 aa).

The first 17 residues, 1–17, serve as a signal peptide directing secretion; sequence MIILIYLFVLVWEEAQG. Residues 36–129 form the Link domain; the sequence is GVYHREARSG…SERWDAYCYN (94 aa). 3 cysteine pairs are disulfide-bonded: Cys58/Cys127, Cys82/Cys103, and Cys135/Cys161. Asn118 carries N-linked (GlcNAc...) asparagine glycosylation. The 113-residue stretch at 135-247 folds into the CUB domain; it reads CGGVFTDPKR…GGFQIKYVTV (113 aa). Glu183, Asp191, Asp232, Ser234, and Val235 together coordinate Ca(2+). A disulfide bridge links Cys188 with Cys210. Residue Asn258 is glycosylated (N-linked (GlcNAc...) asparagine).

In terms of assembly, interacts (via Link domain) with inter-alpha-inhibitor (I-alpha-I) component bikunin. Interacts with ITIH2/HC2; this interaction is required for transesterification of the HC to hyaluronan. Interacts (via Link and CUB domains) with ITIH1. Chondroitin sulfate may be required for the stability of the complex. Interacts (via Link domain) with various C-X-C and C-C chemokines including PF4, CXCL8, CXCL11, CXCL12, CCL2, CCL7, CCL19, CCL21, and CCL27; this interaction interferes with chemokine binding to glycosaminoglycans. Interacts (primarily via Link domain) with BMP2; this interaction is inhibited by hyaluronan. Interacts (via both Link and CUB domains) with TNFSF11. Interacts (via CUB domain) with FN1 (via type III repeats 9-14); this interaction enhances fibronectin fibril assembly. TNFAIP6 may act as a bridging molecule between FN1 and THBS1. As to expression, vascular smooth muscle cells.

The protein localises to the secreted. Functionally, major regulator of extracellular matrix organization during tissue remodeling. Catalyzes the transfer of a heavy chain (HC) from inter-alpha-inhibitor (I-alpha-I) complex to hyaluronan. Cleaves the ester bond between the C-terminus of the HC and GalNAc residue of the chondroitin sulfate chain in I-alpha-I complex followed by transesterification of the HC to hyaluronan. In the process, potentiates the antiprotease function of I-alpha-I complex through release of free bikunin. Acts as a catalyst in the formation of hyaluronan-HC oligomers and hyaluronan-rich matrix surrounding the cumulus cell-oocyte complex, a necessary step for oocyte fertilization. Assembles hyaluronan in pericellular matrices that serve as platforms for receptor clustering and signaling. Enables binding of hyaluronan deposited on the surface of macrophages to LYVE1 on lymphatic endothelium and facilitates macrophage extravasation. Alters hyaluronan binding to functionally latent CD44 on vascular endothelium, switching CD44 into an active state that supports leukocyte rolling. Modulates the interaction of chemokines with extracellular matrix components and proteoglycans on endothelial cell surface, likely preventing chemokine gradient formation. In a negative feedback mechanism, may limit excessive neutrophil recruitment at inflammatory sites by antagonizing the association of CXCL8 with glycosaminoglycans on vascular endothelium. Has a role in osteogenesis and bone remodeling. Inhibits BMP2-dependent differentiation of mesenchymal stem cell to osteoblasts. Protects against bone erosion during inflammation by inhibiting TNFSF11/RANKL-dependent osteoclast activation. The chain is Tumor necrosis factor-inducible gene 6 protein (TNFAIP6) from Oryctolagus cuniculus (Rabbit).